The primary structure comprises 134 residues: MPTINQLVRRARKDVVEKSKAPALKSNPFKRGVCTRVYTTTPKKPNSALRKVARIRLTNQLEVTAYIPGEGHNLQEHSIVLVRGGRVKDLPGVRYHIVRGTLDASGVNGRNQSRSKYGTKRPKPGQAAAGGKKK.

3-methylthioaspartic acid is present on Asp-89. A disordered region spans residues Thr-101–Lys-134. The segment covering Gly-125 to Lys-134 has biased composition (low complexity).

It belongs to the universal ribosomal protein uS12 family. In terms of assembly, part of the 30S ribosomal subunit. Contacts proteins S8 and S17. May interact with IF1 in the 30S initiation complex.

Its function is as follows. With S4 and S5 plays an important role in translational accuracy. Functionally, interacts with and stabilizes bases of the 16S rRNA that are involved in tRNA selection in the A site and with the mRNA backbone. Located at the interface of the 30S and 50S subunits, it traverses the body of the 30S subunit contacting proteins on the other side and probably holding the rRNA structure together. The combined cluster of proteins S8, S12 and S17 appears to hold together the shoulder and platform of the 30S subunit. This is Small ribosomal subunit protein uS12 from Gemmatimonas aurantiaca (strain DSM 14586 / JCM 11422 / NBRC 100505 / T-27).